The chain runs to 75 residues: Probable protein BRICK1-B (75 aa).

Residues 41 to 72 are a coiled coil; that stretch reads MSCRSRLATLNEKLTTLERRIEYIEARVTKGE.

The protein belongs to the BRK1 family.

It localises to the cytoplasm. Its subcellular location is the cytoskeleton. Functionally, involved in regulation of actin and microtubule organization. Part of a WAVE complex that activates the Arp2/3 complex. The chain is Probable protein BRICK1-B (brk1-b) from Xenopus laevis (African clawed frog).